The following is a 130-amino-acid chain: Keratin-associated protein 12-1 (130 aa).

14 repeat units span residues 10 to 14 (CQPSC), 15 to 29 (CVSSSCQPSCCVSSP), 34 to 38 (CFVSS), 40 to 44 (CQPSC), 45 to 49 (CVSSS), 60 to 64 (CIPVR), 85 to 89 (CQSSV), 90 to 94 (CVPVS), 95 to 99 (CRPVC), 104 to 108 (CQSSG), 109 to 113 (CCQPS), 114 to 118 (CPTLV), 119 to 123 (CKPVT), and 124 to 128 (CSNPS). The interval 10–128 (CQPSCCVSSS…CKPVTCSNPS (119 aa)) is 14 X 5 AA approximate repeats.

This sequence belongs to the KRTAP type 12 family. In terms of assembly, interacts with hair keratins. Expressed only in the head and back skin of a 3 day old mouse. Not expressed in adult skin.

Its function is as follows. In the hair cortex, hair keratin intermediate filaments are embedded in an interfilamentous matrix, consisting of hair keratin-associated proteins (KRTAP), which are essential for the formation of a rigid and resistant hair shaft through their extensive disulfide bond cross-linking with abundant cysteine residues of hair keratins. The matrix proteins include the high-sulfur and high-glycine-tyrosine keratins. In Mus musculus (Mouse), this protein is Keratin-associated protein 12-1.